The chain runs to 541 residues: Zinc finger protein 513 (541 aa).

Positions 1-120 (MPRRKQSHPQ…ARGERPGPAC (120 aa)) are disordered. Residues 44–55 (LEFEEEEEEEEG) show a composition bias toward acidic residues. 2 positions are modified to phosphoserine: Ser-85 and Ser-96. Positions 103–115 (EPARGPGEARGER) are enriched in basic and acidic residues. C2H2-type zinc fingers lie at residues 150 to 172 (YSCRLCAFVSHYSSHLKRHMQTH), 178 to 200 (FRCGRCPYASAQLVNLTRHTRTH), 206 to 228 (YRCPHCPFACSSLGNLRRHQRTH), 360 to 382 (FACSLCPFATHYPNHLARHMKTH), 388 to 410 (FRCARCPYASAHLDNLKRHQRVH), 416 to 438 (YKCPLCPYACGNLANLKRHGRIH), 444 to 466 (FRCSLCNYSCNQSMNLKRHMLRH), and 472 to 494 (FRCATCAYTTGHWDNYKRHQKVH). Positions 492-541 (KVHGHGGAGGPGLSAPEGWAPPHSPPSVLSTRGSAALGATGSRALHTDSP) are disordered.

The protein belongs to the krueppel C2H2-type zinc-finger protein family. Binds DNA. Can associate with the proximal promoter regions of PAX6 and SP4, and their known targets including ARR3, RHO, OPN1MW2 and OPN1SW.

It localises to the nucleus. Its function is as follows. Transcriptional regulator that plays a role in retinal development and maintenance. This chain is Zinc finger protein 513 (Znf513), found in Rattus norvegicus (Rat).